The sequence spans 370 residues: Pulmonary surfactant-associated protein B (370 aa).

Positions 1–24 are cleaved as a signal peptide; it reads MAKSHLPPWLLLLLLPTLCGPGTA. The propeptide occupies 25 to 184; sequence VWATSPLACA…PHTQDLSAQR (160 aa). In terms of domain architecture, Saposin A-type spans 26–66; the sequence is WATSPLACAQGPEFWCQSLEQALQCKALGHCLQEVWGHVGA. 3 Saposin B-type domains span residues 66 to 148, 188 to 265, and 284 to 359; these read ADDL…QPGS, PLPL…SSVD, and QDPE…VATL. Disulfide bonds link cysteine 70/cysteine 144, cysteine 73/cysteine 138, cysteine 101/cysteine 113, cysteine 192/cysteine 261, cysteine 195/cysteine 255, cysteine 219/cysteine 230, cysteine 288/cysteine 355, cysteine 291/cysteine 349, and cysteine 314/cysteine 324. The propeptide occupies 264–370; it reads VDSIGQVPPT…PLQCIQSPHF (107 aa). Residue asparagine 300 is glycosylated (N-linked (GlcNAc...) asparagine).

As to quaternary structure, homodimer; disulfide-linked.

The protein resides in the secreted. It localises to the extracellular space. The protein localises to the surface film. Its function is as follows. Pulmonary surfactant-associated proteins promote alveolar stability by lowering the surface tension at the air-liquid interface in the peripheral air spaces. SP-B increases the collapse pressure of palmitic acid to nearly 70 millinewtons per meter. This Oryctolagus cuniculus (Rabbit) protein is Pulmonary surfactant-associated protein B (SFTPB).